We begin with the raw amino-acid sequence, 143 residues long: Transcriptional regulator MraZ (143 aa).

2 consecutive SpoVT-AbrB domains span residues 5–47 and 76–119; these read EYNH…SMDE and ATEC…SSDQ.

This sequence belongs to the MraZ family. As to quaternary structure, forms oligomers.

It is found in the cytoplasm. It localises to the nucleoid. This chain is Transcriptional regulator MraZ, found in Alkaliphilus metalliredigens (strain QYMF).